Reading from the N-terminus, the 361-residue chain is 5-exo-hydroxycamphor dehydrogenase (361 aa).

Zn(2+) contacts are provided by C40, H62, C98, C101, C104, and C170.

This sequence belongs to the zinc-containing alcohol dehydrogenase family. Requires Zn(2+) as cofactor.

It carries out the reaction (1R,4R,5R)-5-hydroxycamphor + NAD(+) = (1R,4R)-bornane-2,5-dione + NADH + H(+). It functions in the pathway terpene metabolism; (R)-camphor degradation. The protein is 5-exo-hydroxycamphor dehydrogenase (camD) of Pseudomonas putida (Arthrobacter siderocapsulatus).